The chain runs to 250 residues: 5'-nucleotidase SurE (250 aa).

A divalent metal cation contacts are provided by Asp8, Asp9, Ser40, and Asn94.

This sequence belongs to the SurE nucleotidase family. The cofactor is a divalent metal cation.

The protein localises to the cytoplasm. It carries out the reaction a ribonucleoside 5'-phosphate + H2O = a ribonucleoside + phosphate. Its function is as follows. Nucleotidase that shows phosphatase activity on nucleoside 5'-monophosphates. The polypeptide is 5'-nucleotidase SurE (Wolbachia sp. subsp. Brugia malayi (strain TRS)).